The chain runs to 512 residues: Bifunctional purine biosynthesis protein PurH (512 aa).

The MGS-like domain occupies 1–150 (MIGEERVVRA…KNFPAVLVLV (150 aa)).

The protein belongs to the PurH family.

The catalysed reaction is (6R)-10-formyltetrahydrofolate + 5-amino-1-(5-phospho-beta-D-ribosyl)imidazole-4-carboxamide = 5-formamido-1-(5-phospho-D-ribosyl)imidazole-4-carboxamide + (6S)-5,6,7,8-tetrahydrofolate. It carries out the reaction IMP + H2O = 5-formamido-1-(5-phospho-D-ribosyl)imidazole-4-carboxamide. It participates in purine metabolism; IMP biosynthesis via de novo pathway; 5-formamido-1-(5-phospho-D-ribosyl)imidazole-4-carboxamide from 5-amino-1-(5-phospho-D-ribosyl)imidazole-4-carboxamide (10-formyl THF route): step 1/1. Its pathway is purine metabolism; IMP biosynthesis via de novo pathway; IMP from 5-formamido-1-(5-phospho-D-ribosyl)imidazole-4-carboxamide: step 1/1. In Chloroflexus aurantiacus (strain ATCC 29366 / DSM 635 / J-10-fl), this protein is Bifunctional purine biosynthesis protein PurH.